Here is a 275-residue protein sequence, read N- to C-terminus: NH(3)-dependent NAD(+) synthetase (275 aa).

Gly-50–Ser-57 contributes to the ATP binding site. Asp-56 lines the Mg(2+) pocket. Arg-147 provides a ligand contact to deamido-NAD(+). Thr-167 lines the ATP pocket. A Mg(2+)-binding site is contributed by Glu-172. Positions 180 and 187 each coordinate deamido-NAD(+). Residues Lys-196 and Thr-218 each contribute to the ATP site. His-267–Lys-268 lines the deamido-NAD(+) pocket.

Belongs to the NAD synthetase family. Homodimer.

It catalyses the reaction deamido-NAD(+) + NH4(+) + ATP = AMP + diphosphate + NAD(+) + H(+). It participates in cofactor biosynthesis; NAD(+) biosynthesis; NAD(+) from deamido-NAD(+) (ammonia route): step 1/1. Functionally, catalyzes the ATP-dependent amidation of deamido-NAD to form NAD. Uses ammonia as a nitrogen source. In Pseudomonas putida (strain ATCC 47054 / DSM 6125 / CFBP 8728 / NCIMB 11950 / KT2440), this protein is NH(3)-dependent NAD(+) synthetase.